Reading from the N-terminus, the 149-residue chain is Transcriptional repressor NrdR (149 aa).

A zinc finger lies at 3–34 (CPFCAAVDTKVIDSRLVGDGSQVRRRRQCLEC). The region spanning 49-139 (PRVIKSDDIR…VYRSFEDIRE (91 aa)) is the ATP-cone domain.

The protein belongs to the NrdR family. Zn(2+) serves as cofactor.

Functionally, negatively regulates transcription of bacterial ribonucleotide reductase nrd genes and operons by binding to NrdR-boxes. In Photorhabdus laumondii subsp. laumondii (strain DSM 15139 / CIP 105565 / TT01) (Photorhabdus luminescens subsp. laumondii), this protein is Transcriptional repressor NrdR.